Reading from the N-terminus, the 168-residue chain is Ribosome-binding factor A (168 aa).

Residues 125–138 show a composition bias toward basic and acidic residues; that stretch reads RVREGAKHAGDSDP. The segment at 125–168 is disordered; the sequence is RVREGAKHAGDSDPYRVLGEGDLEGPATGGPDVEDEGGANSHDR.

Belongs to the RbfA family. In terms of assembly, monomer. Binds 30S ribosomal subunits, but not 50S ribosomal subunits or 70S ribosomes.

The protein resides in the cytoplasm. In terms of biological role, one of several proteins that assist in the late maturation steps of the functional core of the 30S ribosomal subunit. Associates with free 30S ribosomal subunits (but not with 30S subunits that are part of 70S ribosomes or polysomes). Required for efficient processing of 16S rRNA. May interact with the 5'-terminal helix region of 16S rRNA. This Mycolicibacterium gilvum (strain PYR-GCK) (Mycobacterium gilvum (strain PYR-GCK)) protein is Ribosome-binding factor A.